A 380-amino-acid chain; its full sequence is MTDYPIKYRLIKKEKHTGARLGEIITPHGTFPTPMFMPVGTQATVKTQSPEELKAMGSGIILSNTYHLWLRPGDELIAKAGGLHKFMNWDQPILTDSGGFQVYSLADSRNITEEGVTFKNHLNGSKMFLSPEKAISIQNNLGSDIMMSFDECPQFYQPYDYVKKSIERTSRWAERGLKAHRRPHDQGLFGIVQGAGFEDLRRQSAADLVSMDFPGYSVGGLAVGESHEEMNAVLDFTTPLLPENKPRYLMGVGAPDSLIDGVIRGIDMFDCVLPTRIARNGTCMTSEGRLVVKNAKFAEDFTPLDHDCDCYTCQNYTRAYIRHLLKADETFGIRLTSYHNLYFLVNLMKKVRQAIMDDNLLEFREDFLERYGYNTSNRNF.

D96 functions as the Proton acceptor in the catalytic mechanism. Substrate contacts are provided by residues 96–100 (DSGGF), D150, Q193, and G220. The tract at residues 251–257 (GVGAPDS) is RNA binding. D270 acts as the Nucleophile in catalysis. An RNA binding; important for wobble base 34 recognition region spans residues 275–279 (TRIAR). Residues C308, C310, C313, and H339 each contribute to the Zn(2+) site.

This sequence belongs to the queuine tRNA-ribosyltransferase family. In terms of assembly, homodimer. Within each dimer, one monomer is responsible for RNA recognition and catalysis, while the other monomer binds to the replacement base PreQ1. It depends on Zn(2+) as a cofactor.

It carries out the reaction 7-aminomethyl-7-carbaguanine + guanosine(34) in tRNA = 7-aminomethyl-7-carbaguanosine(34) in tRNA + guanine. It functions in the pathway tRNA modification; tRNA-queuosine biosynthesis. Functionally, catalyzes the base-exchange of a guanine (G) residue with the queuine precursor 7-aminomethyl-7-deazaguanine (PreQ1) at position 34 (anticodon wobble position) in tRNAs with GU(N) anticodons (tRNA-Asp, -Asn, -His and -Tyr). Catalysis occurs through a double-displacement mechanism. The nucleophile active site attacks the C1' of nucleotide 34 to detach the guanine base from the RNA, forming a covalent enzyme-RNA intermediate. The proton acceptor active site deprotonates the incoming PreQ1, allowing a nucleophilic attack on the C1' of the ribose to form the product. After dissociation, two additional enzymatic reactions on the tRNA convert PreQ1 to queuine (Q), resulting in the hypermodified nucleoside queuosine (7-(((4,5-cis-dihydroxy-2-cyclopenten-1-yl)amino)methyl)-7-deazaguanosine). The protein is Queuine tRNA-ribosyltransferase of Streptococcus uberis (strain ATCC BAA-854 / 0140J).